The primary structure comprises 119 residues: Microtubule nucleation factor SSNA1 (119 aa).

T2 bears the N-acetylthreonine mark. Residues 2 to 32 (TQQGAALQNYNNELVKCIEELCQKREELCRQ) form an important for localization to the centrosome region. Residues 13 to 70 (NELVKCIEELCQKREELCRQIQQEEDEKQRLQNEVRQLTEKLARVNENLARKIASRNE) are a coiled coil.

Belongs to the SSNA1 family. As to quaternary structure, self-associates to form fibrils. Also forms dimers as well as monomers. Interacts with SPAST.

It localises to the nucleus. The protein localises to the cytoplasm. The protein resides in the cytoskeleton. It is found in the microtubule organizing center. Its subcellular location is the centrosome. It localises to the centriole. The protein localises to the midbody. The protein resides in the flagellum basal body. It is found in the flagellum axoneme. Its subcellular location is the cell projection. It localises to the axon. Functionally, microtubule-binding protein which stabilizes dynamic microtubules by slowing growth and shrinkage at both plus and minus ends and serves as a sensor of microtubule damage, protecting microtubules from the microtubule-severing enzyme SPAST. Induces microtubule branching which is mediated by the formation of long SSNA1 fibrils which guide microtubule protofilaments to split apart from the mother microtubule and form daughter microtubules. Plays a role in axon outgrowth and branching. Required for cell division. The sequence is that of Microtubule nucleation factor SSNA1 from Mus musculus (Mouse).